The following is a 390-amino-acid chain: S-adenosylmethionine synthase (390 aa).

H15 contributes to the ATP binding site. Residue D17 coordinates Mg(2+). A K(+)-binding site is contributed by E43. E56 and Q99 together coordinate L-methionine. Residues 99 to 109 (QSPDINQGVDR) are flexible loop. ATP contacts are provided by residues 164 to 166 (DAK), 230 to 231 (RF), D239, 245 to 246 (RK), A262, and K266. D239 contributes to the L-methionine binding site. An L-methionine-binding site is contributed by K270.

It belongs to the AdoMet synthase family. Homotetramer; dimer of dimers. The cofactor is Mg(2+). K(+) is required as a cofactor.

The protein localises to the cytoplasm. The catalysed reaction is L-methionine + ATP + H2O = S-adenosyl-L-methionine + phosphate + diphosphate. It functions in the pathway amino-acid biosynthesis; S-adenosyl-L-methionine biosynthesis; S-adenosyl-L-methionine from L-methionine: step 1/1. In terms of biological role, catalyzes the formation of S-adenosylmethionine (AdoMet) from methionine and ATP. The overall synthetic reaction is composed of two sequential steps, AdoMet formation and the subsequent tripolyphosphate hydrolysis which occurs prior to release of AdoMet from the enzyme. The chain is S-adenosylmethionine synthase from Photorhabdus laumondii subsp. laumondii (strain DSM 15139 / CIP 105565 / TT01) (Photorhabdus luminescens subsp. laumondii).